Reading from the N-terminus, the 145-residue chain is Transcription antitermination protein NusB (145 aa).

The protein belongs to the NusB family.

In terms of biological role, involved in transcription antitermination. Required for transcription of ribosomal RNA (rRNA) genes. Binds specifically to the boxA antiterminator sequence of the ribosomal RNA (rrn) operons. This is Transcription antitermination protein NusB from Burkholderia cenocepacia (strain HI2424).